Here is a 192-residue protein sequence, read N- to C-terminus: Small ribosomal subunit protein uS4c-2 (192 aa).

The 65-residue stretch at 91–155 (TRLDHLVYRA…PKPPEYLPPY (65 aa)) folds into the S4 RNA-binding domain.

It belongs to the universal ribosomal protein uS4 family. In terms of assembly, part of the 30S ribosomal subunit. Contacts protein S5. The interaction surface between S4 and S5 is involved in control of translational fidelity.

It localises to the plastid. The protein resides in the chloroplast. In terms of biological role, one of the primary rRNA binding proteins, it binds directly to 16S rRNA where it nucleates assembly of the body of the 30S subunit. Functionally, with S5 and S12 plays an important role in translational accuracy. The polypeptide is Small ribosomal subunit protein uS4c-2 (Cyanidium caldarium (Red alga)).